The sequence spans 438 residues: MRDNTAKGITAGSGSQQTTYDPARTEATLTTTTFALRRYDLAGRALYDLDFSKLNPQTPTRDANCQITFNPFGGFGLSGSAPQQWNEVKNKVPVEVAQDPTDPYRFAVLLVPRSVVYYEQLQRGLALPNQGSSSGSGQQNTTIGAYGLKVKNAEADTAKSNEKLQGDESKSSNGSSSTSTTTQRGSTNSDTKVKALKIEVKKKSDSEDNGQLQLEKNDLANAPIKRGEESGQSVQLKADDFGTAPSSSGSGGNSNPGSPTPWRPWLATEQIHKDLPKWSASILILYDAPYARNRTAIDRVDHLDPKVMTANYPPSWRMPKWNHHGLWDWKARDVLFQTTGFDESNTSNTKQGFQKEADSDKSAPIALPFEAYFANIGNLTWFGQALLVFGGNGHVTKSAHTAPLSIWLYIYLVKAVTFRLLLANSLLSKSNIYKKTAN.

2 disordered regions span residues 1–22 (MRDN…TYDP) and 156–264 (DTAK…PWRP). The segment covering 156–170 (DTAKSNEKLQGDESK) has biased composition (basic and acidic residues). The segment covering 171-189 (SSNGSSSTSTTTQRGSTNS) has biased composition (low complexity). Residues 191–206 (TKVKALKIEVKKKSDS) are compositionally biased toward basic and acidic residues.

This sequence belongs to the adhesin P1 family.

This is an uncharacterized protein from Mycoplasma pneumoniae (strain ATCC 29342 / M129 / Subtype 1) (Mycoplasmoides pneumoniae).